The primary structure comprises 201 residues: CASP-like protein 2B2 (201 aa).

Topologically, residues 1-28 (MSYLGVGVSPGNVTGSSTKMKLIDRKVR) are cytoplasmic. The chain crosses the membrane as a helical span at residues 29–49 (VTELILRSLVCAFALVAAILV). Residues 50–71 (ATDVQVREIFTIQKKAKFTDMK) are Extracellular-facing. A helical transmembrane segment spans residues 72–92 (ALVFLVVINGIAAGYSLVQAV). The Cytoplasmic portion of the chain corresponds to 93-108 (CCLVGLMKGSVLLSEP). A helical membrane pass occupies residues 109–129 (LAWAIFFGDQAVAYLCVAGVA). Residues 130-166 (AAAQSAAFAKLGQPELQWMKICDMYGKFCNQVGEGIA) are Extracellular-facing. A helical transmembrane segment spans residues 167 to 187 (SALFACIGMVLISCISAFGVF). Residues 188–201 (RLYGGSKPRQSSRW) lie on the Cytoplasmic side of the membrane.

The protein belongs to the Casparian strip membrane proteins (CASP) family. Homodimer and heterodimers.

It localises to the cell membrane. The chain is CASP-like protein 2B2 from Arabidopsis lyrata subsp. lyrata (Lyre-leaved rock-cress).